A 291-amino-acid chain; its full sequence is ATP synthase gamma chain (291 aa).

It belongs to the ATPase gamma chain family. As to quaternary structure, F-type ATPases have 2 components, CF(1) - the catalytic core - and CF(0) - the membrane proton channel. CF(1) has five subunits: alpha(3), beta(3), gamma(1), delta(1), epsilon(1). CF(0) has three main subunits: a, b and c.

Its subcellular location is the cell membrane. In terms of biological role, produces ATP from ADP in the presence of a proton gradient across the membrane. The gamma chain is believed to be important in regulating ATPase activity and the flow of protons through the CF(0) complex. The chain is ATP synthase gamma chain from Lachnoclostridium phytofermentans (strain ATCC 700394 / DSM 18823 / ISDg) (Clostridium phytofermentans).